The sequence spans 123 residues: Large ribosomal subunit protein uL14c (123 aa).

It belongs to the universal ribosomal protein uL14 family. In terms of assembly, part of the 50S ribosomal subunit. Interacts with IOJAP.

The protein localises to the plastid. It localises to the chloroplast. Functionally, binds to 23S rRNA. The chain is Large ribosomal subunit protein uL14c from Zea mays (Maize).